Consider the following 1644-residue polypeptide: Terminal uridylyltransferase 4 (1644 aa).

Disordered stretches follow at residues 31–63 (NQTL…QNDI), 96–168 (CKAK…SLLL), and 205–257 (ALQN…EMDY). Residues 36 to 46 (ARNDKSVKEIE) are compositionally biased toward basic and acidic residues. Ser104 carries the post-translational modification Phosphoserine. The segment covering 112–125 (TISQAKSEKATSLQ) has biased composition (polar residues). Phosphoserine occurs at positions 134 and 156. Polar residues predominate over residues 206-222 (LQNSPRSQKQQTCTDNT). The segment covering 238–252 (DLSKMKNDESNKENS) has biased composition (basic and acidic residues). Positions 253–333 (SEMDYLENAT…KEKRHKKNIL (81 aa)) are required for interaction with LIN28A and pre-let-7 RNA. Zn(2+) contacts are provided by Cys306, Cys309, His322, and His328. Residues 579–617 (EKNSIAEENKAKADQPKDDTKKTETDNQSNAMKEKHGKS) form a disordered region. Residues 582–603 (SIAEENKAKADQPKDDTKKTET) show a composition bias toward basic and acidic residues. One can recognise a PAP-associated 1 domain in the interval 628–678 (SLGQLWLELLKFYTLDFALEEYVICVRIQDILTRENKNWPKRRIAIEDPFS). A disordered region spans residues 794–816 (GQDSSSLSTSKSSEIEPKLDKKQ). The span at 806–816 (SEIEPKLDKKQ) shows a compositional bias: basic and acidic residues. A sufficient for monouridylation activity region spans residues 901-1634 (DKFILTSGKP…CATRRCRERC (734 aa)). Residues 913–930 (IVCSICKKDGHSKNDCPE) form a CCHC-type 1 zinc finger. Residues 998–1001 (SSKN), 1008–1011 (SDLD), Asn1081, Lys1103, 1121–1125 (SYAYI), and His1237 contribute to the UTP site. The Mg(2+) site is built by Asp1009 and Asp1011. The region spanning 1184–1237 (SLGELWLGLLRFYTEEFDFKEYVISIRQKKLLTTFEKQWTSKCIAIEDPFDLNH) is the PAP-associated 2 domain. A CCHC-type 2 zinc finger spans residues 1293–1310 (RCCRVCGKIGHYMKDCPK). Residues 1321–1348 (KDSEEEKEGNEEEKDSRDVLDPRDLHDT) are disordered. The segment covering 1334-1348 (KDSRDVLDPRDLHDT) has biased composition (basic and acidic residues). A CCHC-type 3 zinc finger spans residues 1357 to 1374 (LRCFICGDAGHVRRECPE). Residues 1401-1426 (AGSAQQQGDQSIRTRQSSECSESPSY) are compositionally biased toward low complexity. The interval 1401 to 1482 (AGSAQQQGDQ…LYNFPQSPPA (82 aa)) is disordered. Positions 1441 to 1452 (AAITQPSSQPGS) are enriched in polar residues. Residues 1453–1470 (QPKLGPPQQGAQPPHQVQ) are compositionally biased toward low complexity. Arg1624 carries the omega-N-methylarginine modification.

It belongs to the DNA polymerase type-B-like family. In terms of assembly, interacts with LIN28A in the presence of pre-let-7 RNA. Interacts with T2BP. Interacts with MOV10; the interaction is RNA-dependent. Mg(2+) serves as cofactor. It depends on Mn(2+) as a cofactor.

It localises to the nucleus. It is found in the cytoplasm. Its subcellular location is the cytoplasmic ribonucleoprotein granule. The catalysed reaction is RNA(n) + UTP = RNA(n)-3'-uridine ribonucleotide + diphosphate. In terms of biological role, uridylyltransferase that mediates the terminal uridylation of mRNAs with short (less than 25 nucleotides) poly(A) tails, hence facilitating global mRNA decay. Essential for both oocyte maturation and fertility. Through 3' terminal uridylation of mRNA, sculpts, with TUT7, the maternal transcriptome by eliminating transcripts during oocyte growth. Involved in microRNA (miRNA)-induced gene silencing through uridylation of deadenylated miRNA targets. Also functions as an integral regulator of microRNA biogenesis using 3 different uridylation mechanisms. Acts as a suppressor of miRNA biogenesis by mediating the terminal uridylation of some miRNA precursors, including that of let-7 (pre-let-7), miR107, miR-143 and miR-200c. Uridylated miRNAs are not processed by Dicer and undergo degradation. Degradation of pre-let-7 contributes to the maintenance of embryonic stem (ES) cell pluripotency. Also catalyzes the 3' uridylation of miR-26A, a miRNA that targets IL6 transcript. This abrogates the silencing of IL6 transcript, hence promoting cytokine expression. In the absence of LIN28A, TUT7 and TUT4 monouridylate group II pre-miRNAs, which includes most of pre-let7 members, that shapes an optimal 3' end overhang for efficient processing. Adds oligo-U tails to truncated pre-miRNAS with a 5' overhang which may promote rapid degradation of non-functional pre-miRNA species. May also suppress Toll-like receptor-induced NF-kappa-B activation via binding to T2BP. Does not play a role in replication-dependent histone mRNA degradation. Due to functional redundancy between TUT4 and TUT7, the identification of the specific role of each of these proteins is difficult. TUT4 and TUT7 restrict retrotransposition of long interspersed element-1 (LINE-1) in cooperation with MOV10 counteracting the RNA chaperonne activity of L1RE1. TUT7 uridylates LINE-1 mRNAs in the cytoplasm which inhibits initiation of reverse transcription once in the nucleus, whereas uridylation by TUT4 destabilizes mRNAs in cytoplasmic ribonucleoprotein granules. This is Terminal uridylyltransferase 4 from Homo sapiens (Human).